Reading from the N-terminus, the 586-residue chain is FAD-linked oxidoreductase orf1 (586 aa).

A signal peptide spans 1 to 17; it reads MKSFATTVLLVTPGIYA. 12 N-linked (GlcNAc...) asparagine glycosylation sites follow: N29, N51, N79, N110, N146, N188, N314, N321, N358, N402, N434, and N461. In terms of domain architecture, FAD-binding PCMH-type spans 124-303; sequence TLGNYVSYAI…LSMTAKVHPD (180 aa).

This sequence belongs to the oxygen-dependent FAD-linked oxidoreductase family.

The enzyme catalyses betaenone C = betaenone A. It participates in mycotoxin biosynthesis. Functionally, FAD-linked oxidoreductase; part of the gene cluster that mediates the biosynthesis of betaenones, phytotoxic polyketides involved in leaf spot disease in sugar beets. The first step of the pathway is the synthesis of dehydroprobetaenone I by the polyketide synthase bet1 and the enoyl reductase bet3 via condensation of one acetyl-CoA starter unit with 7 malonyl-CoA units and 5 methylations. The C-terminal reductase (R) domain of bet1 catalyzes the reductive release of the polyketide chain. Because bet1 lacks a designated enoylreductase (ER) domain, the required activity is provided the enoyl reductase bet3. The short-chain dehydrogenase/reductase bet4 then catalyzes reduction of dehydroprobetaenone I to probetaenone I. The cytochrome P450 monooxygenase bet2 catalyzes successive epoxidation, oxidation (resulting from epoxide opening) and hydroxylation to install a tertiary alcohol in the decaline ring to yield betaenone C from dehydroprobetaenone I and betaenone B from probetaenone I. The FAD-linked oxidoreductase (orf1) is probably responsible for the conversion of betaenone C to betaenone A via an intramolecular aldol reaction between C-1 and C-17 to form the bridged tricyclic system in betaenone A. The polypeptide is FAD-linked oxidoreductase orf1 (Neocamarosporium betae (Beet black rot fungus)).